The following is a 117-amino-acid chain: DNA-directed RNA polymerase subunit omega (117 aa).

This sequence belongs to the RNA polymerase subunit omega family. In terms of assembly, the RNAP catalytic core consists of 2 alpha, 1 beta, 1 beta' and 1 omega subunit. When a sigma factor is associated with the core the holoenzyme is formed, which can initiate transcription.

The catalysed reaction is RNA(n) + a ribonucleoside 5'-triphosphate = RNA(n+1) + diphosphate. In terms of biological role, promotes RNA polymerase assembly. Latches the N- and C-terminal regions of the beta' subunit thereby facilitating its interaction with the beta and alpha subunits. This chain is DNA-directed RNA polymerase subunit omega, found in Ruegeria sp. (strain TM1040) (Silicibacter sp.).